The primary structure comprises 348 residues: Cuticle collagen rol-6 (348 aa).

The tract at residues 76-348 is disordered; sequence GYGATGVQPP…SARRHRKFQL (273 aa). The span at 120 to 137 shows a compositional bias: gly residues; sequence PGGGFPDGPFPNGGGPRG. Triple-helical region stretches follow at residues 152–178, 196–258, 261–284, and 288–323; these read GPAGPEGEEGPDGHDGQDGVPGFDGKD, GPLG…DGER, GRPGPRGPPGEAGPEGPQGPTGRD, and GQSGPQGEPGLQGYGGAAGEDGPEGPPGAPGLPGKD. Residues 194–231 are compositionally biased toward low complexity; that stretch reads PQGPLGPQGPNGAPGLRGMRGARGQPGRPGRDGNPGMP. Positions 297–306 are enriched in gly residues; that stretch reads GLQGYGGAAG. Residues 322 to 338 are compositionally biased toward basic and acidic residues; that stretch reads KDAEYCKCPGREGDAGR. Over residues 339–348 the composition is skewed to basic residues; it reads SARRHRKFQL.

It belongs to the cuticular collagen family. As to quaternary structure, collagen polypeptide chains are complexed within the cuticle by disulfide bonds and other types of covalent cross-links. In terms of tissue distribution, localizes in stripes along the alae.

Nematode cuticles are composed largely of collagen-like proteins. The cuticle functions both as an exoskeleton and as a barrier to protect the worm from its environment. May play a role in cuticle remodeling in response to the environment. Involved in body morphogenesis. The polypeptide is Cuticle collagen rol-6 (rol-6) (Caenorhabditis elegans).